The following is a 273-amino-acid chain: Tryptophan synthase alpha chain (273 aa).

Residues Glu49 and Asp60 each act as proton acceptor in the active site.

The protein belongs to the TrpA family. In terms of assembly, tetramer of two alpha and two beta chains.

It catalyses the reaction (1S,2R)-1-C-(indol-3-yl)glycerol 3-phosphate + L-serine = D-glyceraldehyde 3-phosphate + L-tryptophan + H2O. The protein operates within amino-acid biosynthesis; L-tryptophan biosynthesis; L-tryptophan from chorismate: step 5/5. Functionally, the alpha subunit is responsible for the aldol cleavage of indoleglycerol phosphate to indole and glyceraldehyde 3-phosphate. The chain is Tryptophan synthase alpha chain from Albidiferax ferrireducens (strain ATCC BAA-621 / DSM 15236 / T118) (Rhodoferax ferrireducens).